A 171-amino-acid polypeptide reads, in one-letter code: Co-chaperone protein HscB (171 aa).

Residues 2 to 74 form the J domain; the sequence is DYFTLFGLPA…LTRAEYLLSL (73 aa).

The protein belongs to the HscB family. Interacts with HscA and stimulates its ATPase activity. Interacts with IscU.

Co-chaperone involved in the maturation of iron-sulfur cluster-containing proteins. Seems to help targeting proteins to be folded toward HscA. The chain is Co-chaperone protein HscB from Salmonella typhimurium (strain LT2 / SGSC1412 / ATCC 700720).